The chain runs to 176 residues: Cytochrome b (176 aa).

3 consecutive transmembrane segments (helical) span residues Phe-33–Met-53, Trp-77–Ile-98, and Trp-113–Leu-133. Heme b-binding residues include His-83 and His-97.

This sequence belongs to the cytochrome b family. In terms of assembly, the cytochrome bc1 complex contains 11 subunits: 3 respiratory subunits (MT-CYB, CYC1 and UQCRFS1), 2 core proteins (UQCRC1 and UQCRC2) and 6 low-molecular weight proteins (UQCRH/QCR6, UQCRB/QCR7, UQCRQ/QCR8, UQCR10/QCR9, UQCR11/QCR10 and a cleavage product of UQCRFS1). This cytochrome bc1 complex then forms a dimer. It depends on heme b as a cofactor.

The protein localises to the mitochondrion inner membrane. Its function is as follows. Component of the ubiquinol-cytochrome c reductase complex (complex III or cytochrome b-c1 complex) that is part of the mitochondrial respiratory chain. The b-c1 complex mediates electron transfer from ubiquinol to cytochrome c. Contributes to the generation of a proton gradient across the mitochondrial membrane that is then used for ATP synthesis. The polypeptide is Cytochrome b (MT-CYB) (Promops centralis (Big crested mastiff bat)).